Here is a 466-residue protein sequence, read N- to C-terminus: UDP-N-acetylmuramate--L-alanine ligase (466 aa).

ATP is bound at residue 117–123 (GTHGKTT).

The protein belongs to the MurCDEF family.

It is found in the cytoplasm. The catalysed reaction is UDP-N-acetyl-alpha-D-muramate + L-alanine + ATP = UDP-N-acetyl-alpha-D-muramoyl-L-alanine + ADP + phosphate + H(+). It functions in the pathway cell wall biogenesis; peptidoglycan biosynthesis. Cell wall formation. The sequence is that of UDP-N-acetylmuramate--L-alanine ligase from Streptomyces griseus subsp. griseus (strain JCM 4626 / CBS 651.72 / NBRC 13350 / KCC S-0626 / ISP 5235).